A 129-amino-acid polypeptide reads, in one-letter code: uncharacterized protein (129 aa).

3 helical membrane passes run 49–69 (LWSL…IVGV), 72–92 (FTIF…NLIF), and 101–118 (YFNC…NLLQ).

The protein resides in the membrane. This is an uncharacterized protein from Saccharomyces cerevisiae (strain ATCC 204508 / S288c) (Baker's yeast).